A 252-amino-acid chain; its full sequence is MAEELGLGFGEAVPVEMLPEGCRHRREARTGLAARSKACLALTCCLLSFPILAGLSTLLMTGQLRIPGKDCMFPTVTEERSAPSAQPVYTPSRDKPKAHLTIMRQTPVPHLKNELAALHWENNLGMAFTKNRMNYTNKFLVIPESGDYFIYSQITFRGTTSECGDISRVRRPKKPDSITVVITKVADSYPEPAHLLTGTKSVCEISSNWFQPIYLGAMFSLEEGDRLMVNVSDISLVDYTKEDKTFFGAFLI.

Residues 1 to 39 (MAEELGLGFGEAVPVEMLPEGCRHRREARTGLAARSKAC) lie on the Cytoplasmic side of the membrane. The chain crosses the membrane as a helical; Signal-anchor for type II membrane protein span at residues 40 to 60 (LALTCCLLSFPILAGLSTLLM). Residues 61–252 (TGQLRIPGKD…DKTFFGAFLI (192 aa)) lie on the Extracellular side of the membrane. One can recognise a THD domain in the interval 96 to 252 (PKAHLTIMRQ…DKTFFGAFLI (157 aa)). N134 carries an N-linked (GlcNAc...) asparagine glycan. The cysteines at positions 163 and 203 are disulfide-linked. N-linked (GlcNAc...) asparagine glycosylation is present at N230.

It belongs to the tumor necrosis factor family. In terms of assembly, homotrimer.

Its subcellular location is the membrane. Functionally, receptor for TNFRSF25 and TNFRSF6B. Mediates activation of NF-kappa-B. Inhibits vascular endothelial growth and angiogenesis (in vitro). Promotes activation of caspases and apoptosis. Promotes splenocyte alloactivation. This is Tumor necrosis factor ligand superfamily member 15 (Tnfsf15) from Rattus norvegicus (Rat).